A 92-amino-acid chain; its full sequence is Co-chaperonin GroES (92 aa).

The protein belongs to the GroES chaperonin family. Heptamer of 7 subunits arranged in a ring. Interacts with the chaperonin GroEL.

It is found in the cytoplasm. Functionally, together with the chaperonin GroEL, plays an essential role in assisting protein folding. The GroEL-GroES system forms a nano-cage that allows encapsulation of the non-native substrate proteins and provides a physical environment optimized to promote and accelerate protein folding. GroES binds to the apical surface of the GroEL ring, thereby capping the opening of the GroEL channel. The protein is Co-chaperonin GroES of Methanosarcina mazei (strain ATCC BAA-159 / DSM 3647 / Goe1 / Go1 / JCM 11833 / OCM 88) (Methanosarcina frisia).